We begin with the raw amino-acid sequence, 235 residues long: Thiamine import ATP-binding protein ThiQ (235 aa).

In terms of domain architecture, ABC transporter spans 2–230 (LKLIDITWLY…QASASALLGI (229 aa)). ATP is bound at residue 32–39 (GPSGAGKS).

The protein belongs to the ABC transporter superfamily. Thiamine importer (TC 3.A.1.19.1) family. As to quaternary structure, the complex is composed of two ATP-binding proteins (ThiQ), two transmembrane proteins (ThiP) and a solute-binding protein (ThiB).

The protein localises to the cell inner membrane. The catalysed reaction is thiamine(out) + ATP + H2O = thiamine(in) + ADP + phosphate + H(+). Functionally, part of the ABC transporter complex ThiBPQ involved in thiamine import. Responsible for energy coupling to the transport system. This Salmonella paratyphi A (strain ATCC 9150 / SARB42) protein is Thiamine import ATP-binding protein ThiQ.